The primary structure comprises 552 residues: Putative phosphate permease MT2339 (552 aa).

Helical transmembrane passes span 38–58 (WHLS…WWAF), 69–89 (ILVL…GNDV), 107–127 (ALLV…GDVT), 146–166 (DFMN…LFAN), 178–198 (IIGG…QGGA), 213–233 (VSWV…YGVI), 326–346 (VPLV…FKGF), 360–380 (FIIA…AKTL), 389–409 (TFLM…FSHG), 437–457 (AVPA…LWFI), 472–492 (MHPA…MGAT), 493–513 (VLGL…GVGI), and 526–546 (IVLA…VGLV).

This sequence belongs to the inorganic phosphate transporter (PiT) (TC 2.A.20) family.

It localises to the cell membrane. Potential transporter for phosphate. The polypeptide is Putative phosphate permease MT2339 (Mycobacterium tuberculosis (strain CDC 1551 / Oshkosh)).